The following is a 114-amino-acid chain: Probable 4-amino-4-deoxy-L-arabinose-phosphoundecaprenol flippase subunit ArnE (114 aa).

The 74-residue stretch at 39–112 folds into the EamA domain; the sequence is RSPWLWLALF…VIGGVALLGQ (74 aa). 3 helical membrane passes run 41–61, 64–84, and 91–111; these read PWLW…LLVL, LPVS…TLIA, and PVDV…ALLG.

This sequence belongs to the ArnE family. Heterodimer of ArnE and ArnF.

The protein resides in the cell inner membrane. It participates in bacterial outer membrane biogenesis; lipopolysaccharide biosynthesis. Translocates 4-amino-4-deoxy-L-arabinose-phosphoundecaprenol (alpha-L-Ara4N-phosphoundecaprenol) from the cytoplasmic to the periplasmic side of the inner membrane. This Pseudomonas fluorescens (strain Pf0-1) protein is Probable 4-amino-4-deoxy-L-arabinose-phosphoundecaprenol flippase subunit ArnE.